The following is a 260-amino-acid chain: MENEVNAGTASSSRWNPTKDQITLLENLYKEGIRTPSADQIQQITGRLRAYGHIEGKNVFYWFQNHKARQRQKQKQERMAYFNRLLHKTSRFFYPPPCSNVGCVSPYYLQQASDHHMNQHGSVYTNDLLHRNNVMIPSGGYEKRTVTQHQKQLSDIRTTAATRMPISPSSLRFDRFALRDNCYAGEDINVNSSGRKTLPLFPLQPLNASNADGMGSSSFALGSDSPVDCSSDGAGREQPFIDFFSGGSTSTRFDSNGNGL.

A DNA-binding region (homeobox; WUS-type) is located at residues 10–74; the sequence is ASSSRWNPTK…NHKARQRQKQ (65 aa).

This sequence belongs to the WUS homeobox family.

It localises to the nucleus. Functionally, probable transcription factor involved in embryonic patterning. Required for apical embryo development after fertilization. Its specific localization to the apical daughter cell of the zygote, while WOX8 is confined to the basal cell, suggests that the asymmetric division of the plant zygote separates determinants of apical and basal cell fates. This Arabidopsis thaliana (Mouse-ear cress) protein is WUSCHEL-related homeobox 2 (WOX2).